A 314-amino-acid polypeptide reads, in one-letter code: Palmitoyl-protein thioesterase 1 (314 aa).

Residues 1 to 25 form the signal peptide; sequence MISICCSRFSCILFLLFLIFSLVLS. 3 disulfides stabilise this stretch: C53–C54, C104–C136, and C160–C168. S123 serves as the catalytic Nucleophile. Residue N240 is glycosylated (N-linked (GlcNAc...) asparagine). Active-site residues include D241 and H295.

It belongs to the palmitoyl-protein thioesterase family. As to expression, ubiquitously expressed.

The protein localises to the lysosome. The catalysed reaction is S-hexadecanoyl-L-cysteinyl-[protein] + H2O = L-cysteinyl-[protein] + hexadecanoate + H(+). Its function is as follows. Cleaves thioester-linked long fatty acyl groups such as palmitate from modified cysteine residues in proteins or peptides. The polypeptide is Palmitoyl-protein thioesterase 1 (Ppt1) (Drosophila melanogaster (Fruit fly)).